The sequence spans 948 residues: Isoleucine--tRNA ligase (948 aa).

A 'HIGH' region motif is present at residues 58 to 68 (PYANGSIHIGH). Residue E572 participates in L-isoleucyl-5'-AMP binding. The short motif at 613–617 (KMSKS) is the 'KMSKS' region element. K616 lines the ATP pocket. Zn(2+) is bound by residues C911, C914, C931, and C934.

The protein belongs to the class-I aminoacyl-tRNA synthetase family. IleS type 1 subfamily. In terms of assembly, monomer. Zn(2+) serves as cofactor.

Its subcellular location is the cytoplasm. It catalyses the reaction tRNA(Ile) + L-isoleucine + ATP = L-isoleucyl-tRNA(Ile) + AMP + diphosphate. Functionally, catalyzes the attachment of isoleucine to tRNA(Ile). As IleRS can inadvertently accommodate and process structurally similar amino acids such as valine, to avoid such errors it has two additional distinct tRNA(Ile)-dependent editing activities. One activity is designated as 'pretransfer' editing and involves the hydrolysis of activated Val-AMP. The other activity is designated 'posttransfer' editing and involves deacylation of mischarged Val-tRNA(Ile). This chain is Isoleucine--tRNA ligase, found in Edwardsiella ictaluri (strain 93-146).